The primary structure comprises 155 residues: Small ribosomal subunit protein uS7cz/uS7cy (155 aa).

This sequence belongs to the universal ribosomal protein uS7 family. As to quaternary structure, part of the 30S ribosomal subunit.

The protein resides in the plastid. The protein localises to the chloroplast. Functionally, one of the primary rRNA binding proteins, it binds directly to 16S rRNA where it nucleates assembly of the head domain of the 30S subunit. The polypeptide is Small ribosomal subunit protein uS7cz/uS7cy (rps7-A) (Phalaenopsis aphrodite subsp. formosana (Moth orchid)).